The sequence spans 183 residues: Inner membrane-spanning protein YciB (183 aa).

Helical transmembrane passes span 22 to 44 (IYTA…WVRY), 54 to 74 (TFLL…DAFI), 76 to 96 (WKVT…RYGF), 119 to 139 (VNLA…YVAF), and 149 to 169 (FKVF…GVYL).

This sequence belongs to the YciB family.

Its subcellular location is the cell inner membrane. Plays a role in cell envelope biogenesis, maintenance of cell envelope integrity and membrane homeostasis. This Aeromonas salmonicida (strain A449) protein is Inner membrane-spanning protein YciB.